Reading from the N-terminus, the 373-residue chain is Dual-specificity RNA methyltransferase RlmN (373 aa).

Glu-94 serves as the catalytic Proton acceptor. Residues 100 to 339 (EDDRATLCVS…VIVRKTRGDD (240 aa)) form the Radical SAM core domain. Cysteines 107 and 344 form a disulfide. Residues Cys-114, Cys-118, and Cys-121 each contribute to the [4Fe-4S] cluster site. S-adenosyl-L-methionine-binding positions include 168-169 (GE), Ser-200, 222-224 (SIH), and Asn-301. Residue Cys-344 is the S-methylcysteine intermediate of the active site.

Belongs to the radical SAM superfamily. RlmN family. The cofactor is [4Fe-4S] cluster.

The protein resides in the cytoplasm. The catalysed reaction is adenosine(2503) in 23S rRNA + 2 reduced [2Fe-2S]-[ferredoxin] + 2 S-adenosyl-L-methionine = 2-methyladenosine(2503) in 23S rRNA + 5'-deoxyadenosine + L-methionine + 2 oxidized [2Fe-2S]-[ferredoxin] + S-adenosyl-L-homocysteine. It catalyses the reaction adenosine(37) in tRNA + 2 reduced [2Fe-2S]-[ferredoxin] + 2 S-adenosyl-L-methionine = 2-methyladenosine(37) in tRNA + 5'-deoxyadenosine + L-methionine + 2 oxidized [2Fe-2S]-[ferredoxin] + S-adenosyl-L-homocysteine. In terms of biological role, specifically methylates position 2 of adenine 2503 in 23S rRNA and position 2 of adenine 37 in tRNAs. m2A2503 modification seems to play a crucial role in the proofreading step occurring at the peptidyl transferase center and thus would serve to optimize ribosomal fidelity. The chain is Dual-specificity RNA methyltransferase RlmN from Shewanella pealeana (strain ATCC 700345 / ANG-SQ1).